The following is a 1244-amino-acid chain: MYFNNELSDQKVCLLRELKNLKYSDDARDRINFFLWELKFLDCFLHLKSFPFASECGMLHVSQKMIDIWKSHCSKTINGTILYYGKVPLNLFVNWKKVIWKTKQEFRAQYSFPKTPLAANKVIDDDDNTHSPKFVMEVIDVFVENLNVLMKINDPCSWFFVPGHMKEQIEQVLKELKLLRFFVCFVSNKCSIQPQYRCTTFYTHALIEASHIAMVVWLHLPIYGNVNQDLAPSEVSRLFSDFMEMKIKSIQPVISRNNIYIDVLQALKSTIPQAQKKHAAESSTVEIPTHSLTVGLSDQMANLQEMLCLLRDNLIHLPILDLEFHLQDMDSVIIDAGLLIYSLYDIKREKEDTVLDDMNRALGLDLPRNIEPIKVMVYLVMQKAIQCNLPKVHGLGYVDFLLKNLKDFQGRYSDSLAFLKNQLQVIQTEFESLQPFLKVVVEEPQNKLKTLNEDCAIQIIRKAHEVEYVVDACINKGIPHWCLERWLQDIIEEITCIKAKIQEKNTVDDTMKTVIARTSSKLARTPRMNEEIVGFKDVIENLRNQLLNGTKGQDVISIHGMPGLGKTTLANRLYSDRSVVSHFDICAQCCVSQVYSYKDLLLALLCDAIGEGSVRRELHANELADMLRKTLLPRRYLILVDDVWENSVWDDLRGCFPDANNRSRIILTTRHHEVAKYASVHSDPLHLRMFDEDESWKLLEKKVFGEQSCSPLLKKVGLRIAKMCGQLPLSIVLVAGILSEMEKEVECWEQVANDLGTHIRSNSRAIVDQSYHVLPCHLKSCFLYFGAFLGVREIRISRLIRLWISESFIKSCEGRRLEDIAEGYLENLIGRNLVMVTQRANSNGKVKACRLHDVLLNFCKERAAEENLLLWINRDQSTKAVYSHKQHAHLAFTKMDNLVEWSASSSLVGSVLIMRYNPYFARCPLYAVSHILLNFKFLKVLDLKHQVVIDFIPTELPYLRYLTADIGQNSIPSSISNLWNLETLILNRRSVVHKILLPSTVWDMVKLRFLFIPNFSPENKKALLKNSPNLDDLETLSYPYFARVKDAELMLRKTPNLRKLTCKVKCLEYLHQYHALNFPIRLEILKLYRSNAFKAIPFCISAPNLKYLKLSGFYLDSQYLSKTADHLKNLEVLKLYYVEFGDHREWKVSNGMFPQLKILKLEDVSLMKWIVADDAFPNLEQLVLRGCQDLMEIPSCFMDILSLQYIEVEDCNESVVKSAMNIQETQVEDYQNTNFKLVLIEVHY.

2 coiled-coil regions span residues 411 to 434 and 526 to 548; these read RYSD…ESLQ and PRMN…QLLN. The NB-ARC domain maps to 527 to 755; that stretch reads RMNEEIVGFK…ECWEQVANDL (229 aa). 560 to 567 contacts ATP; it reads GMPGLGKT. LRR repeat units follow at residues 978 to 1004, 1079 to 1103, 1127 to 1150, 1153 to 1178, and 1213 to 1237; these read LWNL…VWDM, PIRL…ISAP, LKNL…KVSN, FPQL…AFPN, and ESVV…NFKL.

It belongs to the disease resistance NB-LRR family.

It localises to the cytoplasm. The protein localises to the membrane. Confers resistance to late blight (Phytophthora infestans) races carrying the avirulence gene Avr1. Resistance proteins guard the plant against pathogens that contain an appropriate avirulence protein via an indirect interaction with this avirulence protein. That triggers a defense system including the hypersensitive response, which restricts the pathogen growth. The polypeptide is Putative late blight resistance protein homolog R1A-4 (R1A-4) (Solanum demissum (Wild potato)).